We begin with the raw amino-acid sequence, 1010 residues long: Retinoblastoma-related protein 1 (1010 aa).

The segment at 1–23 (MEGAAPPASSGSEVTGAGSGKVD) is disordered. Residues 419 to 619 (TPVSTAMTTA…EKGSSMYNSL (201 aa)) are domain A. The tract at residues 419 to 861 (TPVSTAMTTA…NEVFIPTVKP (443 aa)) is pocket. Residues 620-730 (IVARPTLSAE…PAAGGELCAE (111 aa)) form a spacer region. The interval 657–679 (LPPLPFQKQEHSPDKDEVRSPKR) is disordered. The segment covering 664–679 (KQEHSPDKDEVRSPKR) has biased composition (basic and acidic residues). The segment at 731 to 861 (TGIGVFLSKI…NEVFIPTVKP (131 aa)) is domain B. A disordered region spans residues 868–898 (SGTSPNKKNEEKCAADGPYPESPRLSRFPNL).

The protein belongs to the retinoblastoma protein (RB) family.

It localises to the nucleus. Its function is as follows. Regulator of biological processes that recruits a histone deacetylase to control gene transcription. May play a role in the entry into mitosis, negatively regulating the cell proliferation. Formation of stable complexes with geminiviridae replication-associated proteins may create a cellular environment which favors viral DNA replication. The polypeptide is Retinoblastoma-related protein 1 (RBR1) (Oryza sativa subsp. japonica (Rice)).